A 119-amino-acid polypeptide reads, in one-letter code: Photosystem II extrinsic protein V (119 aa).

3 residues coordinate heme c: cysteine 36, cysteine 39, and histidine 40.

The protein belongs to the cytochrome c family. PsbV subfamily. In terms of assembly, PSII is composed of 1 copy each of membrane proteins PsbA, PsbB, PsbC, PsbD, PsbE, PsbF, PsbH, PsbI, PsbJ, PsbK, PsbL, PsbM, PsbT, PsbX, PsbY, PsbZ, Psb30/Ycf12, peripheral proteins PsbO, CyanoQ (PsbQ), PsbU, PsbV and a large number of cofactors. It forms dimeric complexes. The cofactor is heme c.

It is found in the cellular thylakoid membrane. Functionally, one of the extrinsic, lumenal subunits of photosystem II (PSII). PSII is a light-driven water plastoquinone oxidoreductase, using light energy to abstract electrons from H(2)O, generating a proton gradient subsequently used for ATP formation. The extrinsic proteins stabilize the structure of photosystem II oxygen-evolving complex (OEC), the ion environment of oxygen evolution and protect the OEC against heat-induced inactivation. Low-potential cytochrome c that plays a role in the OEC of PSII. The protein is Photosystem II extrinsic protein V (psbV) of Aphanizomenon flos-aquae.